Consider the following 279-residue polypeptide: Probable endonuclease 4 (279 aa).

Zn(2+) contacts are provided by His68, His108, Glu143, Asp177, His180, His214, Asp227, His229, and Glu259.

It belongs to the AP endonuclease 2 family. It depends on Zn(2+) as a cofactor.

It catalyses the reaction Endonucleolytic cleavage to 5'-phosphooligonucleotide end-products.. Its function is as follows. Endonuclease IV plays a role in DNA repair. It cleaves phosphodiester bonds at apurinic or apyrimidinic (AP) sites, generating a 3'-hydroxyl group and a 5'-terminal sugar phosphate. The chain is Probable endonuclease 4 from Nitrosopumilus maritimus (strain SCM1).